Reading from the N-terminus, the 341-residue chain is Ketol-acid reductoisomerase (NADP(+)) (341 aa).

Residues 2–181 enclose the KARI N-terminal Rossmann domain; it reads AKVYYNGDVN…GAARAGVLET (180 aa). NADP(+) contacts are provided by residues 25–28, arginine 48, serine 52, and 82–85; these read YGSQ and DEHQ. Histidine 107 is a catalytic residue. Glycine 133 provides a ligand contact to NADP(+). Residues 182 to 327 enclose the KARI C-terminal knotted domain; that stretch reads TFKEETETDL…RELREMMPFV (146 aa). Aspartate 190, glutamate 194, glutamate 226, and glutamate 230 together coordinate Mg(2+). Serine 251 lines the substrate pocket.

This sequence belongs to the ketol-acid reductoisomerase family. It depends on Mg(2+) as a cofactor.

The catalysed reaction is (2R)-2,3-dihydroxy-3-methylbutanoate + NADP(+) = (2S)-2-acetolactate + NADPH + H(+). It carries out the reaction (2R,3R)-2,3-dihydroxy-3-methylpentanoate + NADP(+) = (S)-2-ethyl-2-hydroxy-3-oxobutanoate + NADPH + H(+). It participates in amino-acid biosynthesis; L-isoleucine biosynthesis; L-isoleucine from 2-oxobutanoate: step 2/4. It functions in the pathway amino-acid biosynthesis; L-valine biosynthesis; L-valine from pyruvate: step 2/4. Involved in the biosynthesis of branched-chain amino acids (BCAA). Catalyzes an alkyl-migration followed by a ketol-acid reduction of (S)-2-acetolactate (S2AL) to yield (R)-2,3-dihydroxy-isovalerate. In the isomerase reaction, S2AL is rearranged via a Mg-dependent methyl migration to produce 3-hydroxy-3-methyl-2-ketobutyrate (HMKB). In the reductase reaction, this 2-ketoacid undergoes a metal-dependent reduction by NADPH to yield (R)-2,3-dihydroxy-isovalerate. The protein is Ketol-acid reductoisomerase (NADP(+)) of Shouchella clausii (strain KSM-K16) (Alkalihalobacillus clausii).